We begin with the raw amino-acid sequence, 242 residues long: Ubiquinone biosynthesis O-methyltransferase (242 aa).

Positions 44, 64, 85, and 129 each coordinate S-adenosyl-L-methionine.

It belongs to the methyltransferase superfamily. UbiG/COQ3 family.

The enzyme catalyses a 3-demethylubiquinol + S-adenosyl-L-methionine = a ubiquinol + S-adenosyl-L-homocysteine + H(+). It catalyses the reaction a 3-(all-trans-polyprenyl)benzene-1,2-diol + S-adenosyl-L-methionine = a 2-methoxy-6-(all-trans-polyprenyl)phenol + S-adenosyl-L-homocysteine + H(+). It participates in cofactor biosynthesis; ubiquinone biosynthesis. In terms of biological role, O-methyltransferase that catalyzes the 2 O-methylation steps in the ubiquinone biosynthetic pathway. The sequence is that of Ubiquinone biosynthesis O-methyltransferase from Salmonella choleraesuis (strain SC-B67).